A 124-amino-acid polypeptide reads, in one-letter code: uncharacterized protein (124 aa).

This sequence belongs to the asfivirus H124R family.

It is found in the virion. This is an uncharacterized protein from Ornithodoros (relapsing fever ticks).